A 64-amino-acid polypeptide reads, in one-letter code: Large ribosomal subunit protein bL35c (64 aa).

It belongs to the bacterial ribosomal protein bL35 family.

The protein localises to the plastid. Its subcellular location is the chloroplast. This is Large ribosomal subunit protein bL35c from Thalassiosira pseudonana (Marine diatom).